A 123-amino-acid chain; its full sequence is Large ribosomal subunit protein uL18 (123 aa).

It belongs to the universal ribosomal protein uL18 family. As to quaternary structure, part of the 50S ribosomal subunit; part of the 5S rRNA/L5/L18/L25 subcomplex. Contacts the 5S and 23S rRNAs.

Functionally, this is one of the proteins that bind and probably mediate the attachment of the 5S RNA into the large ribosomal subunit, where it forms part of the central protuberance. This chain is Large ribosomal subunit protein uL18, found in Chlamydia abortus (strain DSM 27085 / S26/3) (Chlamydophila abortus).